We begin with the raw amino-acid sequence, 351 residues long: tRNA pseudouridine synthase D (351 aa).

The active-site Nucleophile is the Asp-81. Positions 158-304 (GVPNYFGSQR…MRHERRAIEL (147 aa)) constitute a TRUD domain.

The protein belongs to the pseudouridine synthase TruD family.

It carries out the reaction uridine(13) in tRNA = pseudouridine(13) in tRNA. Its function is as follows. Responsible for synthesis of pseudouridine from uracil-13 in transfer RNAs. This Aliivibrio fischeri (strain MJ11) (Vibrio fischeri) protein is tRNA pseudouridine synthase D.